A 103-amino-acid chain; its full sequence is UPF0091 protein PH0944 (103 aa).

This sequence belongs to the UPF0091 family.

The protein is UPF0091 protein PH0944 of Pyrococcus horikoshii (strain ATCC 700860 / DSM 12428 / JCM 9974 / NBRC 100139 / OT-3).